The chain runs to 300 residues: D-alanine--D-alanine ligase (300 aa).

An ATP-grasp domain is found at 99-293 (KKILKYANIN…FAELLNSIVK (195 aa)). Residue 126–181 (IEKIGYPVFVKPNSGGSSVATNLVKDKEGIKEAVELALKYDKEVMIENYTKGEEIT) coordinates ATP. Residues aspartate 248, glutamate 260, and asparagine 262 each contribute to the Mg(2+) site.

It belongs to the D-alanine--D-alanine ligase family. The cofactor is Mg(2+). Requires Mn(2+) as cofactor.

It localises to the cytoplasm. It catalyses the reaction 2 D-alanine + ATP = D-alanyl-D-alanine + ADP + phosphate + H(+). Its pathway is cell wall biogenesis; peptidoglycan biosynthesis. Cell wall formation. The chain is D-alanine--D-alanine ligase from Clostridium botulinum (strain Okra / Type B1).